Here is a 50-residue protein sequence, read N- to C-terminus: Large ribosomal subunit protein bL32c (50 aa).

This sequence belongs to the bacterial ribosomal protein bL32 family.

The protein resides in the plastid. It localises to the chloroplast. The polypeptide is Large ribosomal subunit protein bL32c (Lotus japonicus (Lotus corniculatus var. japonicus)).